A 200-amino-acid chain; its full sequence is Holliday junction resolvase RecU (200 aa).

A disordered region spans residues 1-25 (MTIRYPNGKRYNQASQPQKTPIKTH). Polar residues predominate over residues 10-25 (RYNQASQPQKTPIKTH). Threonine 85, aspartate 87, glutamate 100, and glutamine 119 together coordinate Mg(2+).

It belongs to the RecU family. The cofactor is Mg(2+).

The protein resides in the cytoplasm. It carries out the reaction Endonucleolytic cleavage at a junction such as a reciprocal single-stranded crossover between two homologous DNA duplexes (Holliday junction).. Endonuclease that resolves Holliday junction intermediates in genetic recombination. Cleaves mobile four-strand junctions by introducing symmetrical nicks in paired strands. Promotes annealing of linear ssDNA with homologous dsDNA. Required for DNA repair, homologous recombination and chromosome segregation. The sequence is that of Holliday junction resolvase RecU from Bacillus cereus (strain B4264).